We begin with the raw amino-acid sequence, 361 residues long: Queuine tRNA-ribosyltransferase (361 aa).

Residue aspartate 92 is the Proton acceptor of the active site. Residues 92-96 (DSGGF), aspartate 146, glutamine 189, and glycine 216 contribute to the substrate site. Residues 247 to 253 (GVGKPAD) form an RNA binding region. Aspartate 266 serves as the catalytic Nucleophile. An RNA binding; important for wobble base 34 recognition region spans residues 271 to 275 (TRSGR). Zn(2+) is bound by residues cysteine 304, cysteine 306, cysteine 309, and histidine 335.

It belongs to the queuine tRNA-ribosyltransferase family. Homodimer. Within each dimer, one monomer is responsible for RNA recognition and catalysis, while the other monomer binds to the replacement base PreQ1. The cofactor is Zn(2+).

It carries out the reaction 7-aminomethyl-7-carbaguanine + guanosine(34) in tRNA = 7-aminomethyl-7-carbaguanosine(34) in tRNA + guanine. Its pathway is tRNA modification; tRNA-queuosine biosynthesis. Functionally, catalyzes the base-exchange of a guanine (G) residue with the queuine precursor 7-aminomethyl-7-deazaguanine (PreQ1) at position 34 (anticodon wobble position) in tRNAs with GU(N) anticodons (tRNA-Asp, -Asn, -His and -Tyr). Catalysis occurs through a double-displacement mechanism. The nucleophile active site attacks the C1' of nucleotide 34 to detach the guanine base from the RNA, forming a covalent enzyme-RNA intermediate. The proton acceptor active site deprotonates the incoming PreQ1, allowing a nucleophilic attack on the C1' of the ribose to form the product. After dissociation, two additional enzymatic reactions on the tRNA convert PreQ1 to queuine (Q), resulting in the hypermodified nucleoside queuosine (7-(((4,5-cis-dihydroxy-2-cyclopenten-1-yl)amino)methyl)-7-deazaguanosine). This chain is Queuine tRNA-ribosyltransferase, found in Rickettsia akari (strain Hartford).